Consider the following 257-residue polypeptide: Imidazole glycerol phosphate synthase subunit HisF (257 aa).

Catalysis depends on residues aspartate 11 and aspartate 130.

Belongs to the HisA/HisF family. Heterodimer of HisH and HisF.

Its subcellular location is the cytoplasm. It carries out the reaction 5-[(5-phospho-1-deoxy-D-ribulos-1-ylimino)methylamino]-1-(5-phospho-beta-D-ribosyl)imidazole-4-carboxamide + L-glutamine = D-erythro-1-(imidazol-4-yl)glycerol 3-phosphate + 5-amino-1-(5-phospho-beta-D-ribosyl)imidazole-4-carboxamide + L-glutamate + H(+). It functions in the pathway amino-acid biosynthesis; L-histidine biosynthesis; L-histidine from 5-phospho-alpha-D-ribose 1-diphosphate: step 5/9. Functionally, IGPS catalyzes the conversion of PRFAR and glutamine to IGP, AICAR and glutamate. The HisF subunit catalyzes the cyclization activity that produces IGP and AICAR from PRFAR using the ammonia provided by the HisH subunit. The protein is Imidazole glycerol phosphate synthase subunit HisF of Aeromonas salmonicida (strain A449).